A 913-amino-acid chain; its full sequence is Eukaryotic translation initiation factor 3 subunit C (913 aa).

Positions 1–22 (MSRFFANGSDSESESSEEEVQA) are disordered. A compositionally biased stretch (acidic residues) spans 11 to 20 (SESESSEEEV). Phosphoserine occurs at positions 34, 165, 177, and 186. Residues 157 to 285 (FREAPDQESD…KRAEDDEDGE (129 aa)) form a disordered region. Residues 162-171 (DQESDVEEGE) show a composition bias toward acidic residues. Over residues 172-184 (GEPHDSDGDRAGA) the composition is skewed to basic and acidic residues. Residues 214 to 239 (DEDDSDDSIDWDSDTESETESSEDEN) are compositionally biased toward acidic residues. A compositionally biased stretch (basic and acidic residues) spans 244–263 (MRERFLKRTTEKEDKDDDKR). Positions 264 to 276 (KDKRKEQKHKVRK) are enriched in basic residues. In terms of domain architecture, PCI spans 645–821 (FHMHINLELL…ETVVMHRSEP (177 aa)). The interval 856-913 (RGNMGNRDRGYNRNQNNQGGNWGGQRRDNRNQRNRNQRGHHKQQQQQQQQQVQTIEEE) is disordered. Positions 887-898 (QRNRNQRGHHKQ) are enriched in basic residues.

It belongs to the eIF-3 subunit C family. Component of the eukaryotic translation initiation factor 3 (eIF-3) complex. The eIF-3 complex interacts with pix.

Its subcellular location is the cytoplasm. Its function is as follows. Component of the eukaryotic translation initiation factor 3 (eIF-3) complex, which is involved in protein synthesis of a specialized repertoire of mRNAs and, together with other initiation factors, stimulates binding of mRNA and methionyl-tRNAi to the 40S ribosome. The eIF-3 complex specifically targets and initiates translation of a subset of mRNAs involved in cell proliferation. This Drosophila mojavensis (Fruit fly) protein is Eukaryotic translation initiation factor 3 subunit C.